Reading from the N-terminus, the 552-residue chain is Steroid transmembrane transporter SLC22A24 (552 aa).

A run of 12 helical transmembrane segments spans residues 16–36, 146–166, 178–200, 204–226, 234–254, 260–280, 350–370, 380–400, 407–427, 435–455, 474–492, and 496–516; these read FQIC…PNIV, SMVQ…YGHL, LCFL…LVYC, FLAG…EWTL, IMVL…LAFA, ILQL…WKMV, VFGL…LILN, LFQI…LLTL, ISQI…TFLP, VVLA…ASVH, VSGR…LMAY, and LPWI…LLLP.

Belongs to the major facilitator (TC 2.A.1) superfamily. Organic cation transporter (TC 2.A.1.19) family. As to expression, localized to the kidney. Highly specific expression pattern in the nephron, localized to segment 3 of the proximal tubule.

It is found in the cell membrane. It catalyses the reaction estrone 3-sulfate(out) + glutarate(in) = estrone 3-sulfate(in) + glutarate(out). The catalysed reaction is 17beta-estradiol 17-O-(beta-D-glucuronate)(out) + glutarate(in) = 17beta-estradiol 17-O-(beta-D-glucuronate)(in) + glutarate(out). The enzyme catalyses taurocholate(out) + glutarate(in) = taurocholate(in) + glutarate(out). It carries out the reaction 5alpha-androstane-3alpha,17beta-diol 3-O-(beta-D-glucuronate)(out) + glutarate(in) = 5alpha-androstane-3alpha,17beta-diol 3-O-(beta-D-glucuronate)(in) + glutarate(out). It catalyses the reaction glycocholate(out) + glutarate(in) = glycocholate(in) + glutarate(out). The catalysed reaction is dehydroepiandrosterone 3-sulfate(out) + glutarate(in) = dehydroepiandrosterone 3-sulfate(in) + glutarate(out). The enzyme catalyses glutarate(in) + succinate(out) = glutarate(out) + succinate(in). Its activity is regulated as follows. Transport is chloride sensitive and transtimulated by glutaric acid. Transport is inhibited by anionic compounds from different chemical classes. Renal transmembrane organic anion/dicarboxylate exchanger that participates in the reabsorption of conjugated steroids including estradiol-17beta-D-glucuronide (or 17beta-estradiol 17-O-(beta-D-glucuronate)), androstanediol glucuronide (or 5alpha-androstane-3alpha,17beta-diol 3-O-(beta-D-glucuronate)), and estrone 3-sulfate, as well as bile acids taurocholate and glycocholate, driven by an outward gradient of dicarboxylates such as glutarate or succinate. Functionally, similar uptake function as Isoform 1. In terms of biological role, lack of transporter activity. The polypeptide is Steroid transmembrane transporter SLC22A24 (Homo sapiens (Human)).